Reading from the N-terminus, the 463-residue chain is Putative sodium-coupled neutral amino acid transporter 11 (463 aa).

Positions 1–27 (MGYPGQRPVIPPQSHRDDRETLVSEHK) are disordered. Residues 14–25 (SHRDDRETLVSE) show a composition bias toward basic and acidic residues. 11 helical membrane passes run 38–58 (AVFN…PYSM), 65–85 (LGIL…ILLI), 105–125 (GFPG…IAMI), 150–170 (LLIG…LPLS), 178–198 (LGKI…IVVA), 225–245 (VGVM…YGSL), 256–276 (IIHV…TCGY), 298–320 (VTFG…CFVT), 336–356 (VCHI…SLLI), 358–378 (CLGI…IFII), and 397–417 (IMSC…FVMA). 3 N-linked (GlcNAc...) asparagine glycosylation sites follow: N437, N442, and N458.

Belongs to the amino acid/polyamine transporter 2 family.

The protein localises to the membrane. Its function is as follows. Putative sodium-dependent amino acid/proton antiporter. This is Putative sodium-coupled neutral amino acid transporter 11 (SLC38A11) from Bos taurus (Bovine).